The sequence spans 128 residues: Protein BEX1 (128 aa).

The disordered stretch occupies residues 1-55 (MESKDQGAKNLNMENDHQKKEEKEEKPQDTIKREPVVAPTFEAGKNCAPRGGRRR). The span at 14–35 (ENDHQKKEEKEEKPQDTIKREP) shows a compositional bias: basic and acidic residues. Ser105 carries the post-translational modification Phosphoserine; by PKB/AKT1. A disordered region spans residues 107-128 (SLRAVSTDPPHHDHHDEFCLMP). Residues 115 to 128 (PPHHDHHDEFCLMP) show a composition bias toward basic and acidic residues. Residues 117–121 (HHDHH) are his cluster. Residue Cys125 participates in Zn(2+) binding.

Belongs to the BEX family. In terms of assembly, interacts with neurotrophin receptor p75NTR/NGFR. Interacts with OMP. Post-translationally, phosphorylated. Phosphorylation of Ser-105 protects it from the proteasome. Ubiquitinated. Degraded by the proteasome. In terms of tissue distribution, expressed in the central nervous system. Expressed in Schwann cells from newborn sciatic nerve.

The protein localises to the nucleus. It localises to the cytoplasm. Functionally, signaling adapter molecule involved in p75NTR/NGFR signaling. Plays a role in cell cycle progression and neuronal differentiation. Inhibits neuronal differentiation in response to nerve growth factor (NGF). May act as a link between the cell cycle and neurotrophic factor signaling, possibly by functioning as an upstream modulator of receptor signaling, coordinating biological responses to external signals with internal cellular states. In absence of reductive stress, acts as a pseudosubstrate for the CRL2(FEM1B) complex: associates with FEM1B via zinc, thereby preventing association between FEM1B and its substrates. The sequence is that of Protein BEX1 (Bex1) from Rattus norvegicus (Rat).